The following is a 332-amino-acid chain: Glycerol-3-phosphate dehydrogenase [NAD(P)+] (332 aa).

NADPH is bound by residues Ser10, Trp11, Lys31, and Lys105. Sn-glycerol 3-phosphate is bound by residues Lys105, Gly136, and Ser138. Ala140 is an NADPH binding site. Lys191, Asp244, Ser254, Arg255, and Asn256 together coordinate sn-glycerol 3-phosphate. The active-site Proton acceptor is the Lys191. Arg255 is an NADPH binding site. The NADPH site is built by Val279 and Glu281.

This sequence belongs to the NAD-dependent glycerol-3-phosphate dehydrogenase family.

The protein resides in the cytoplasm. The enzyme catalyses sn-glycerol 3-phosphate + NAD(+) = dihydroxyacetone phosphate + NADH + H(+). The catalysed reaction is sn-glycerol 3-phosphate + NADP(+) = dihydroxyacetone phosphate + NADPH + H(+). It functions in the pathway membrane lipid metabolism; glycerophospholipid metabolism. Catalyzes the reduction of the glycolytic intermediate dihydroxyacetone phosphate (DHAP) to sn-glycerol 3-phosphate (G3P), the key precursor for phospholipid synthesis. This chain is Glycerol-3-phosphate dehydrogenase [NAD(P)+], found in Anaeromyxobacter sp. (strain K).